The sequence spans 511 residues: Serine hydroxymethyltransferase (511 aa).

An N6-(pyridoxal phosphate)lysine modification is found at Lys-287.

It belongs to the SHMT family. As to quaternary structure, homotetramer. Pyridoxal 5'-phosphate is required as a cofactor.

It carries out the reaction (6R)-5,10-methylene-5,6,7,8-tetrahydrofolate + glycine + H2O = (6S)-5,6,7,8-tetrahydrofolate + L-serine. Its pathway is one-carbon metabolism; tetrahydrofolate interconversion. Interconversion of serine and glycine. The protein is Serine hydroxymethyltransferase of Caenorhabditis briggsae.